Here is a 218-residue protein sequence, read N- to C-terminus: Large ribosomal subunit protein uL3c (218 aa).

Residues 127-161 form a disordered region; the sequence is GFSRGPMTHGSKNHREPGSTGAGTTPGRIYPGKRM.

It belongs to the universal ribosomal protein uL3 family. In terms of assembly, part of the 50S ribosomal subunit.

Its subcellular location is the plastid. It localises to the organellar chromatophore. Functionally, one of the primary rRNA binding proteins, it binds directly near the 3'-end of the 23S rRNA, where it nucleates assembly of the 50S subunit. The sequence is that of Large ribosomal subunit protein uL3c (rpl3) from Paulinella chromatophora.